A 208-amino-acid polypeptide reads, in one-letter code: Uracil phosphoribosyltransferase (208 aa).

5-phospho-alpha-D-ribose 1-diphosphate is bound by residues R78, R103, and 130–138 (DPMFATGGT). Uracil-binding positions include I193 and 198 to 200 (GDA). Residue D199 coordinates 5-phospho-alpha-D-ribose 1-diphosphate.

This sequence belongs to the UPRTase family. Requires Mg(2+) as cofactor.

The enzyme catalyses UMP + diphosphate = 5-phospho-alpha-D-ribose 1-diphosphate + uracil. The protein operates within pyrimidine metabolism; UMP biosynthesis via salvage pathway; UMP from uracil: step 1/1. Its activity is regulated as follows. Allosterically activated by GTP. In terms of biological role, catalyzes the conversion of uracil and 5-phospho-alpha-D-ribose 1-diphosphate (PRPP) to UMP and diphosphate. This Campylobacter jejuni (strain RM1221) protein is Uracil phosphoribosyltransferase.